A 336-amino-acid polypeptide reads, in one-letter code: Protein-lysine N-methyltransferase EFM3 (336 aa).

Residues Trp147, 173-175, Asp196, Leu232, and Ala251 contribute to the S-adenosyl-L-methionine site; that span reads GTG.

The protein belongs to the class I-like SAM-binding methyltransferase superfamily. EEF2KMT family.

The protein localises to the cytoplasm. Functionally, S-adenosyl-L-methionine-dependent protein-lysine N-methyltransferase that methylates elongation factor 2. The sequence is that of Protein-lysine N-methyltransferase EFM3 from Chaetomium thermophilum (strain DSM 1495 / CBS 144.50 / IMI 039719) (Thermochaetoides thermophila).